A 197-amino-acid polypeptide reads, in one-letter code: Casparian strip membrane protein 4 (197 aa).

Residues 1-34 (MMSSTTIDVPAESSNVAKGKAVLVAAPRPGGWKK) lie on the Cytoplasmic side of the membrane. The helical transmembrane segment at 35–55 (GIAIVDFVLRLGAVAAALGAA) threads the bilayer. Residues 56–85 (TTMATADQTLPFFTQFFQFEASYDSFTTFQ) lie on the Extracellular side of the membrane. A helical membrane pass occupies residues 86–106 (FFVITMALVGCYLVLSLPLSI). The Cytoplasmic portion of the chain corresponds to 107–118 (VSIIRPHALGPK). The chain crosses the membrane as a helical span at residues 119-139 (LFLIILDTVFLTLATASAASA). The Extracellular segment spans residues 140-171 (AAVVYVAHNGNQDSNWLAICNQFGDFCAQTSG). The helical transmembrane segment at 172 to 192 (AVVSSLVAVVVFVLLIVMSAL) threads the bilayer. Topologically, residues 193-197 (ALGKH) are cytoplasmic.

This sequence belongs to the Casparian strip membrane proteins (CASP) family. As to quaternary structure, homodimer and heterodimers.

Its subcellular location is the cell membrane. In terms of biological role, regulates membrane-cell wall junctions and localized cell wall deposition. Required for establishment of the Casparian strip membrane domain (CSD) and the subsequent formation of Casparian strips, a cell wall modification of the root endodermis that determines an apoplastic barrier between the intraorganismal apoplasm and the extraorganismal apoplasm and prevents lateral diffusion. In Lotus japonicus (Lotus corniculatus var. japonicus), this protein is Casparian strip membrane protein 4.